Here is a 334-residue protein sequence, read N- to C-terminus: MGGGEVSKEMGACSLAYRRGDQKLRKFVTARSTKFLLFCCIAFVLVTIVCRSSRPWVNSSIAVADRISGSRKGYTLLMNTWKRYDLLKKSVSHYASCSRLDSIHIVWSEPNPPSESLKEYLHNVLKKKTRDGHEVELRFDINKEDSLNNRFKEIKDLKTDAVFSIDDDIIFPCHTVDFAFNVWESAPDTMVGFVPRVHWPEKSNDKANYYTYSGWWSVWWSGTYSMVLSKAAFFHKKYLSLYTNSMPASIREFTTKNRNCEDIAMSFLIANATNAPAIWVKGKIYEIGSTGISSIGGHTEKRTHCVNRFVAEFGKMPLVYTSMKAVDSRNLWFW.

Topologically, residues M1–K26 are cytoplasmic. The helical; Signal-anchor for type II membrane protein transmembrane segment at F27–V49 threads the bilayer. At C50–W334 the chain is on the lumenal side. N58 is a glycosylation site (N-linked (GlcNAc...) asparagine). Residues D145 to R150, D166 to D168, R196, and R258 to D262 contribute to the substrate site. D168 is a Mn(2+) binding site. A disulfide bond links C260 and C305. D262 is a catalytic residue. A glycan (N-linked (GlcNAc...) asparagine) is linked at N271. Substrate-binding positions include S289–R302 and I292–R302.

This sequence belongs to the glycosyltransferase 64 family. Requires Mn(2+) as cofactor. Expressed in leaves, roots, stem, and flowers.

It localises to the golgi apparatus membrane. Its pathway is protein modification; protein glycosylation. It participates in sphingolipid metabolism. Functionally, mannosyl transferase (ManT) required for the biosynthesis of mannose-carrying glycosylinositol phosphorylceramides (GIPCs). Maybe involved in cell-cell adhesion that maintains the integrity of organs by providing mechanical strength and facilitating the movement of metabolites throughout the plant during development. Prevents abscisic acid- (ABA-) mediated effects on development (e.g. cell size, flowering time, senescence). Probably implicated in beta-(1,4)-galactan biosynthesis thus being a cell-wall synthesis-related (CWSR) protein. The chain is Glycosylinositol phosphorylceramide mannosyl transferase 1 from Arabidopsis thaliana (Mouse-ear cress).